The primary structure comprises 381 residues: Guanine nucleotide-binding protein G(olf) subunit alpha (381 aa).

The disordered stretch occupies residues 1 to 25 (MGCLGNSSKTAEDQGVDEKERREAN). A lipid anchor (N-palmitoyl glycine) is attached at glycine 2. A lipid anchor (S-palmitoyl cysteine) is attached at cysteine 3. The segment covering 10-25 (TAEDQGVDEKERREAN) has biased composition (basic and acidic residues). One can recognise a G-alpha domain in the interval 41-381 (ATHRLLLLGA…RMHLKQYELL (341 aa)). Residues 44 to 57 (RLLLLGAGESGKST) form a G1 motif region. GTP-binding residues include glutamate 52, serine 53, glycine 54, lysine 55, serine 56, and threonine 57. Serine 56 contacts Mg(2+). Position 178 is a phosphothreonine (threonine 178). The tract at residues 183–191 (DLLRCRVLT) is G2 motif. Leucine 185, arginine 186, and threonine 191 together coordinate GTP. Residues threonine 191 and aspartate 210 each coordinate Mg(2+). The segment at 206 to 215 (FHMFDVGGQR) is G3 motif. Glycine 213, asparagine 279, lysine 280, aspartate 282, and alanine 353 together coordinate GTP. Residues 275 to 282 (ILFLNKQD) form a G4 motif region. Positions 351–356 (TCAVDT) are G5 motif.

Belongs to the G-alpha family. G(s) subfamily. G proteins are composed of 3 units; alpha, beta and gamma. The alpha chain contains the guanine nucleotide binding site. Interacts with GAS2L2. Interacts (GDP-bound form) with RIC8B (via C-terminus); promoting GNAL folding and association with the plasma membrane.

The protein resides in the cell membrane. It catalyses the reaction GTP + H2O = GDP + phosphate + H(+). Guanine nucleotide-binding protein (G protein) involved as transducer in olfactory signal transduction controlled by G protein-coupled receptors (GPCRs). Contains the guanine nucleotide binding site and alternates between an active, GTP-bound state and an inactive, GDP-bound state. Signaling by an activated GPCR promotes GDP release and GTP binding. The alpha subunit has a low GTPase activity that converts bound GTP to GDP, thereby terminating the signal. Both GDP release and GTP hydrolysis are modulated by numerous regulatory proteins. GNAL/G(olf) alpha specifically mediates olfactory signal transduction within the olfactory neuroepithelium and the basal ganglia following GPCRs activation. Acts by promoting the specific activation of adenylyl cyclase ADCY3, resulting in increased levels of the signaling molecule cAMP. The protein is Guanine nucleotide-binding protein G(olf) subunit alpha of Mus musculus (Mouse).